Reading from the N-terminus, the 370-residue chain is Cytochrome b (370 aa).

Transmembrane regions (helical) follow at residues 25-45 (FGSM…FLAI), 69-90 (WIMQ…YTHI), 105-125 (WLSG…GYVL), and 170-190 (FFAL…IHIV). Residues H75 and H89 each coordinate heme b. H174 and H188 together coordinate heme b. H193 contributes to the a ubiquinone binding site. Transmembrane regions (helical) follow at residues 218 to 238 (YKDM…MSFM), 280 to 300 (LGGT…PFTH), 312 to 332 (LTQI…WTAT), and 339 to 358 (FITI…IINP).

Belongs to the cytochrome b family. The cytochrome bc1 complex contains 3 respiratory subunits (MT-CYB, CYC1 and UQCRFS1), 2 core proteins (UQCRC1 and UQCRC2) and probably 6 low-molecular weight proteins. Heme b is required as a cofactor.

It is found in the mitochondrion inner membrane. Functionally, component of the ubiquinol-cytochrome c reductase complex (complex III or cytochrome b-c1 complex) that is part of the mitochondrial respiratory chain. The b-c1 complex mediates electron transfer from ubiquinol to cytochrome c. Contributes to the generation of a proton gradient across the mitochondrial membrane that is then used for ATP synthesis. The protein is Cytochrome b (MT-CYB) of Micropechis ikaheca (New Guinean small-eyed snake).